A 236-amino-acid chain; its full sequence is 2-C-methyl-D-erythritol 4-phosphate cytidylyltransferase (236 aa).

The protein belongs to the IspD/TarI cytidylyltransferase family. IspD subfamily. In terms of assembly, homodimer.

The catalysed reaction is 2-C-methyl-D-erythritol 4-phosphate + CTP + H(+) = 4-CDP-2-C-methyl-D-erythritol + diphosphate. The protein operates within isoprenoid biosynthesis; isopentenyl diphosphate biosynthesis via DXP pathway; isopentenyl diphosphate from 1-deoxy-D-xylulose 5-phosphate: step 2/6. Its function is as follows. Catalyzes the formation of 4-diphosphocytidyl-2-C-methyl-D-erythritol from CTP and 2-C-methyl-D-erythritol 4-phosphate (MEP). This chain is 2-C-methyl-D-erythritol 4-phosphate cytidylyltransferase, found in Salmonella arizonae (strain ATCC BAA-731 / CDC346-86 / RSK2980).